The chain runs to 295 residues: Aquaporin NIP2-1 (295 aa).

2 helical membrane passes run 49 to 69 and 83 to 103; these read VVSEVVSTFLLVFVTCGAAGI and SVAGGLIVTVMIYAVGHISGA. Positions 106-108 match the NPA 1 motif; the sequence is NPA. A run of 3 helical transmembrane segments spans residues 124-146, 164-184, and 192-212; these read VPFYWAAQFTGSICASFVLKAVL, SLVIEIIVTFNMMFVTLAVAT, and LAGLAVGSAVCITSIFAGAVS. An NPA 2 motif is present at residues 217–219; sequence NPA. A helical transmembrane segment spans residues 230–250; that stretch reads LYTGLWIYFLGPVLGTLSGAW.

It belongs to the MIP/aquaporin (TC 1.A.8) family. NIP (TC 1.A.8.12) subfamily.

It is found in the membrane. Its function is as follows. Aquaporins facilitate the transport of water and small neutral solutes across cell membranes. This Zea mays (Maize) protein is Aquaporin NIP2-1 (NIP2-1).